Consider the following 511-residue polypeptide: Cytochrome P450 93B2 (511 aa).

The helical transmembrane segment at 4–24 threads the bilayer; sequence LQLIFLLFFFPTLLFLYCLPY. Cysteine 447 contacts heme.

This sequence belongs to the cytochrome P450 family. It depends on heme as a cofactor.

Its subcellular location is the membrane. It catalyses the reaction a flavanone + reduced [NADPH--hemoprotein reductase] + O2 = a flavone + oxidized [NADPH--hemoprotein reductase] + 2 H2O + H(+). The protein operates within secondary metabolite biosynthesis; flavonoid biosynthesis. Its function is as follows. Functions as a flavone synthase II (FNSII) that catalyzes the direct conversion of flavanones to flavones. In vitro, can convert liquiritigenin, naringenin and eriodictyol to 7,4'-dihydroxyflavone, apigenin and luteolin, respectively. The sequence is that of Cytochrome P450 93B2 from Gerbera hybrida (Daisy).